Reading from the N-terminus, the 346-residue chain is Holliday junction branch migration complex subunit RuvB (346 aa).

A large ATPase domain (RuvB-L) region spans residues 4–185; it reads SDRIITASPF…FGIVSRLEFY (182 aa). ATP contacts are provided by residues Leu24, Arg25, Gly66, Lys69, Thr70, Thr71, 132–134, Arg175, Tyr185, and Arg222; that span reads EDY. Thr70 contacts Mg(2+). Residues 186–256 are small ATPAse domain (RuvB-S); that stretch reads TADELGKIVT…VADAALQMLD (71 aa). The tract at residues 259–346 is head domain (RuvB-H); sequence ATGLDVLDRK…TTVPSLFDPD (88 aa). Positions 295, 314, and 319 each coordinate DNA.

It belongs to the RuvB family. Homohexamer. Forms an RuvA(8)-RuvB(12)-Holliday junction (HJ) complex. HJ DNA is sandwiched between 2 RuvA tetramers; dsDNA enters through RuvA and exits via RuvB. An RuvB hexamer assembles on each DNA strand where it exits the tetramer. Each RuvB hexamer is contacted by two RuvA subunits (via domain III) on 2 adjacent RuvB subunits; this complex drives branch migration. In the full resolvosome a probable DNA-RuvA(4)-RuvB(12)-RuvC(2) complex forms which resolves the HJ.

It is found in the cytoplasm. It carries out the reaction ATP + H2O = ADP + phosphate + H(+). In terms of biological role, the RuvA-RuvB-RuvC complex processes Holliday junction (HJ) DNA during genetic recombination and DNA repair, while the RuvA-RuvB complex plays an important role in the rescue of blocked DNA replication forks via replication fork reversal (RFR). RuvA specifically binds to HJ cruciform DNA, conferring on it an open structure. The RuvB hexamer acts as an ATP-dependent pump, pulling dsDNA into and through the RuvAB complex. RuvB forms 2 homohexamers on either side of HJ DNA bound by 1 or 2 RuvA tetramers; 4 subunits per hexamer contact DNA at a time. Coordinated motions by a converter formed by DNA-disengaged RuvB subunits stimulates ATP hydrolysis and nucleotide exchange. Immobilization of the converter enables RuvB to convert the ATP-contained energy into a lever motion, pulling 2 nucleotides of DNA out of the RuvA tetramer per ATP hydrolyzed, thus driving DNA branch migration. The RuvB motors rotate together with the DNA substrate, which together with the progressing nucleotide cycle form the mechanistic basis for DNA recombination by continuous HJ branch migration. Branch migration allows RuvC to scan DNA until it finds its consensus sequence, where it cleaves and resolves cruciform DNA. In Nitrosomonas europaea (strain ATCC 19718 / CIP 103999 / KCTC 2705 / NBRC 14298), this protein is Holliday junction branch migration complex subunit RuvB.